A 356-amino-acid chain; its full sequence is UDP-N-acetylglucosamine--N-acetylmuramyl-(pentapeptide) pyrophosphoryl-undecaprenol N-acetylglucosamine transferase (356 aa).

Residues S195 and Q287 each contribute to the UDP-N-acetyl-alpha-D-glucosamine site.

It belongs to the glycosyltransferase 28 family. MurG subfamily.

Its subcellular location is the cell membrane. The enzyme catalyses Mur2Ac(oyl-L-Ala-gamma-D-Glu-L-Lys-D-Ala-D-Ala)-di-trans,octa-cis-undecaprenyl diphosphate + UDP-N-acetyl-alpha-D-glucosamine = beta-D-GlcNAc-(1-&gt;4)-Mur2Ac(oyl-L-Ala-gamma-D-Glu-L-Lys-D-Ala-D-Ala)-di-trans,octa-cis-undecaprenyl diphosphate + UDP + H(+). Its pathway is cell wall biogenesis; peptidoglycan biosynthesis. Its function is as follows. Cell wall formation. Catalyzes the transfer of a GlcNAc subunit on undecaprenyl-pyrophosphoryl-MurNAc-pentapeptide (lipid intermediate I) to form undecaprenyl-pyrophosphoryl-MurNAc-(pentapeptide)GlcNAc (lipid intermediate II). The sequence is that of UDP-N-acetylglucosamine--N-acetylmuramyl-(pentapeptide) pyrophosphoryl-undecaprenol N-acetylglucosamine transferase from Streptococcus sanguinis (strain SK36).